The sequence spans 276 residues: Glutamate racemase (276 aa).

Residues 9–10 and 41–42 each bind substrate; these read DS and YG. The active-site Proton donor/acceptor is Cys72. 73-74 lines the substrate pocket; that stretch reads NT. Catalysis depends on Cys183, which acts as the Proton donor/acceptor. Substrate is bound at residue 184–185; sequence TH.

It belongs to the aspartate/glutamate racemases family.

The enzyme catalyses L-glutamate = D-glutamate. The protein operates within cell wall biogenesis; peptidoglycan biosynthesis. Functionally, provides the (R)-glutamate required for cell wall biosynthesis. This Shouchella clausii (strain KSM-K16) (Alkalihalobacillus clausii) protein is Glutamate racemase.